The primary structure comprises 338 residues: MERLLDNKFSIEDVHEESLRPKTLEEYIGQQKVKEKIKIFIEAAKKRKEPLDHVLLYGPPGLGKTTLANIIANEMGVDIKITSGPAIERAGDLVAILTNIGENNILFIDEIHRLNRTIEEVLYPAMEDKKVDIVIGKGPSAKTIRLTLPPFTLIGATTRAGLLSSPLRDRFGIIERLDYYTVEELSQIVMRSASILKCDIEKEACIEIAKRSRGTPRVANRLLRRLRDYAMVKHTGSITYEVAKSGLEMFEVDEYGLDLVDRNILEAIVYKFGGGPVGLSTIAAAISEDEGTIEDIYEPYLIQEGFLVKTARGRVATQKAISHIAKIKFKLKESGDNR.

Positions Met1–Tyr180 are large ATPase domain (RuvB-L). Residues Leu19, Arg20, Gly61, Lys64, Thr65, Thr66, Arg170, Tyr180, and Arg217 each contribute to the ATP site. A Mg(2+)-binding site is contributed by Thr65. Residues Thr181–Glu251 form a small ATPAse domain (RuvB-S) region. Residues Glu254–Arg338 are head domain (RuvB-H). Residues Lys309 and Arg314 each contribute to the DNA site.

Belongs to the RuvB family. Homohexamer. Forms an RuvA(8)-RuvB(12)-Holliday junction (HJ) complex. HJ DNA is sandwiched between 2 RuvA tetramers; dsDNA enters through RuvA and exits via RuvB. An RuvB hexamer assembles on each DNA strand where it exits the tetramer. Each RuvB hexamer is contacted by two RuvA subunits (via domain III) on 2 adjacent RuvB subunits; this complex drives branch migration. In the full resolvosome a probable DNA-RuvA(4)-RuvB(12)-RuvC(2) complex forms which resolves the HJ.

Its subcellular location is the cytoplasm. The catalysed reaction is ATP + H2O = ADP + phosphate + H(+). In terms of biological role, the RuvA-RuvB-RuvC complex processes Holliday junction (HJ) DNA during genetic recombination and DNA repair, while the RuvA-RuvB complex plays an important role in the rescue of blocked DNA replication forks via replication fork reversal (RFR). RuvA specifically binds to HJ cruciform DNA, conferring on it an open structure. The RuvB hexamer acts as an ATP-dependent pump, pulling dsDNA into and through the RuvAB complex. RuvB forms 2 homohexamers on either side of HJ DNA bound by 1 or 2 RuvA tetramers; 4 subunits per hexamer contact DNA at a time. Coordinated motions by a converter formed by DNA-disengaged RuvB subunits stimulates ATP hydrolysis and nucleotide exchange. Immobilization of the converter enables RuvB to convert the ATP-contained energy into a lever motion, pulling 2 nucleotides of DNA out of the RuvA tetramer per ATP hydrolyzed, thus driving DNA branch migration. The RuvB motors rotate together with the DNA substrate, which together with the progressing nucleotide cycle form the mechanistic basis for DNA recombination by continuous HJ branch migration. Branch migration allows RuvC to scan DNA until it finds its consensus sequence, where it cleaves and resolves cruciform DNA. The sequence is that of Holliday junction branch migration complex subunit RuvB from Caldicellulosiruptor bescii (strain ATCC BAA-1888 / DSM 6725 / KCTC 15123 / Z-1320) (Anaerocellum thermophilum).